The chain runs to 285 residues: Bifunctional protein FolD (285 aa).

NADP(+) contacts are provided by residues 166–168 (GRS), Ser-191, and Ile-232.

The protein belongs to the tetrahydrofolate dehydrogenase/cyclohydrolase family. As to quaternary structure, homodimer.

It carries out the reaction (6R)-5,10-methylene-5,6,7,8-tetrahydrofolate + NADP(+) = (6R)-5,10-methenyltetrahydrofolate + NADPH. It catalyses the reaction (6R)-5,10-methenyltetrahydrofolate + H2O = (6R)-10-formyltetrahydrofolate + H(+). Its pathway is one-carbon metabolism; tetrahydrofolate interconversion. Its function is as follows. Catalyzes the oxidation of 5,10-methylenetetrahydrofolate to 5,10-methenyltetrahydrofolate and then the hydrolysis of 5,10-methenyltetrahydrofolate to 10-formyltetrahydrofolate. The chain is Bifunctional protein FolD from Rickettsia typhi (strain ATCC VR-144 / Wilmington).